The sequence spans 482 residues: ATP synthase subunit beta (482 aa).

168–175 (GGAGVGKT) serves as a coordination point for ATP.

It belongs to the ATPase alpha/beta chains family. In terms of assembly, F-type ATPases have 2 components, CF(1) - the catalytic core - and CF(0) - the membrane proton channel. CF(1) has five subunits: alpha(3), beta(3), gamma(1), delta(1), epsilon(1). CF(0) has three main subunits: a(1), b(2) and c(9-12). The alpha and beta chains form an alternating ring which encloses part of the gamma chain. CF(1) is attached to CF(0) by a central stalk formed by the gamma and epsilon chains, while a peripheral stalk is formed by the delta and b chains.

Its subcellular location is the cell membrane. It catalyses the reaction ATP + H2O + 4 H(+)(in) = ADP + phosphate + 5 H(+)(out). Its function is as follows. Produces ATP from ADP in the presence of a proton gradient across the membrane. The catalytic sites are hosted primarily by the beta subunits. The sequence is that of ATP synthase subunit beta from Corynebacterium urealyticum (strain ATCC 43042 / DSM 7109).